A 529-amino-acid polypeptide reads, in one-letter code: Cytochrome P450 monooxygenase ausG (529 aa).

A helical membrane pass occupies residues 31-51; that stretch reads LLVVCGLPGLLLLFFVTAILL. C470 is a heme binding site.

It belongs to the cytochrome P450 family. Heme is required as a cofactor.

The protein localises to the membrane. Its pathway is secondary metabolite biosynthesis; terpenoid biosynthesis. In terms of biological role, cytochrome P450 monooxygenase; part of the gene cluster that mediates the biosynthesis of calidodehydroaustin, a fungal meroterpenoid. The first step of the pathway is the synthesis of 3,5-dimethylorsellinic acid by the polyketide synthase ausA. 3,5-dimethylorsellinic acid is then prenylated by the polyprenyl transferase ausN. Further epoxidation by the FAD-dependent monooxygenase ausM and cyclization by the probable terpene cyclase ausL lead to the formation of protoaustinoid A. Protoaustinoid A is then oxidized to spiro-lactone preaustinoid A3 by the combined action of the FAD-binding monooxygenases ausB and ausC, and the dioxygenase ausE. Acid-catalyzed keto-rearrangement and ring contraction of the tetraketide portion of preaustinoid A3 by ausJ lead to the formation of preaustinoid A4. The aldo-keto reductase ausK, with the help of ausH, is involved in the next step by transforming preaustinoid A4 into isoaustinone which is in turn hydroxylated by the P450 monooxygenase ausI to form austinolide. The cytochrome P450 monooxygenase ausG modifies austinolide to austinol. Austinol is further acetylated to austin by the O-acetyltransferase ausP, which spontaneously changes to dehydroaustin. The cytochrome P450 monooxygenase ausR then converts dehydroaustin is into 7-dehydrodehydroaustin. The hydroxylation catalyzed by ausR permits the O-acetyltransferase ausQ to add an additional acetyl group to the molecule, leading to the formation of acetoxydehydroaustin. The short chain dehydrogenase ausT catalyzes the reduction of the double bond present between carbon atoms 1 and 2 to convert 7-dehydrodehydroaustin into 1,2-dihydro-7-hydroxydehydroaustin. AusQ catalyzes not only an acetylation reaction but also the addition of the PKS ausV diketide product to 1,2-dihydro-7-hydroxydehydroaustin, forming precalidodehydroaustin. Finally, the iron/alpha-ketoglutarate-dependent dioxygenase converts precalidodehydroaustin into calidodehydroaustin. The chain is Cytochrome P450 monooxygenase ausG from Aspergillus calidoustus.